The chain runs to 215 residues: Ras-like GTP-binding protein RHO1 (215 aa).

The GTP site is built by Ala30, Val31, Gly32, Lys33, Thr34, and Cys35. Thr34 is a Mg(2+) binding site. 2 consecutive short sequence motifs (switch) follow at residues 43–54 (GEIPTAYVPTVF) and 74–93 (DTAG…ADSD). A Mg(2+)-binding site is contributed by Thr52. 2 residues coordinate GTP: Asp135 and Ser166. A disordered region spans residues 194-215 (VTTQAKSQESTQQKKKSKCLLQ). Low complexity predominate over residues 195–204 (TTQAKSQEST). Basic residues predominate over residues 206–215 (QKKKSKCLLQ). At Cys212 the chain carries Cysteine methyl ester. Residue Cys212 is the site of S-geranylgeranyl cysteine attachment. Positions 213 to 215 (LLQ) are cleaved as a propeptide — removed in mature form.

This sequence belongs to the small GTPase superfamily. Rho family. In terms of assembly, interacts (GTP-bound form) with formin1 (via GBD/FH3 domain); the interaction activates formin1. Interacts (GTP-bound form) with profilin1. Interacts (GDP-bound form and when prenylated) with RhoGDI. It depends on Mg(2+) as a cofactor.

Its subcellular location is the cell membrane. It is found in the cytoplasm. The protein localises to the cytoskeleton. It localises to the cell projection. The protein resides in the phagocytic cup. Its subcellular location is the cytoplasmic vesicle. It is found in the phagosome. The enzyme catalyses GTP + H2O = GDP + phosphate + H(+). With respect to regulation, regulated by guanine nucleotide exchange factors (GEFs) which promote the exchange of bound GDP for free GTP, GTPase activating proteins (GAPs) which increase the GTP hydrolysis activity and GDP dissociation inhibitors which inhibit the dissociation of the nucleotide from the GTPase. Small GTPase which cycles between active GTP-bound and inactive GDP-bound states. Involved in actin cytoskeleton remodeling. Regulates phagocytosis by modulating actin cytoskeleton dynamics through the recruitment of formin1 and profilin1 to the phagocytosis nucleation site. The protein is Ras-like GTP-binding protein RHO1 of Entamoeba histolytica (strain ATCC 30459 / HM-1:IMSS / ABRM).